Reading from the N-terminus, the 197-residue chain is Holliday junction branch migration complex subunit RuvA (197 aa).

Residues M1–L63 form a domain I region. A domain II region spans residues N64–S139. A region of interest (flexible linker) is located at residue S139. The segment at T140–N197 is domain III.

The protein belongs to the RuvA family. In terms of assembly, homotetramer. Forms an RuvA(8)-RuvB(12)-Holliday junction (HJ) complex. HJ DNA is sandwiched between 2 RuvA tetramers; dsDNA enters through RuvA and exits via RuvB. An RuvB hexamer assembles on each DNA strand where it exits the tetramer. Each RuvB hexamer is contacted by two RuvA subunits (via domain III) on 2 adjacent RuvB subunits; this complex drives branch migration. In the full resolvosome a probable DNA-RuvA(4)-RuvB(12)-RuvC(2) complex forms which resolves the HJ.

Its subcellular location is the cytoplasm. In terms of biological role, the RuvA-RuvB-RuvC complex processes Holliday junction (HJ) DNA during genetic recombination and DNA repair, while the RuvA-RuvB complex plays an important role in the rescue of blocked DNA replication forks via replication fork reversal (RFR). RuvA specifically binds to HJ cruciform DNA, conferring on it an open structure. The RuvB hexamer acts as an ATP-dependent pump, pulling dsDNA into and through the RuvAB complex. HJ branch migration allows RuvC to scan DNA until it finds its consensus sequence, where it cleaves and resolves the cruciform DNA. The chain is Holliday junction branch migration complex subunit RuvA from Borreliella burgdorferi (strain ATCC 35210 / DSM 4680 / CIP 102532 / B31) (Borrelia burgdorferi).